Consider the following 208-residue polypeptide: Large ribosomal subunit protein bL25 (208 aa).

The protein belongs to the bacterial ribosomal protein bL25 family. CTC subfamily. As to quaternary structure, part of the 50S ribosomal subunit; part of the 5S rRNA/L5/L18/L25 subcomplex. Contacts the 5S rRNA. Binds to the 5S rRNA independently of L5 and L18.

Functionally, this is one of the proteins that binds to the 5S RNA in the ribosome where it forms part of the central protuberance. The sequence is that of Large ribosomal subunit protein bL25 from Burkholderia pseudomallei (strain K96243).